We begin with the raw amino-acid sequence, 635 residues long: Threonine--tRNA ligase (635 aa).

The tract at residues Met-1–Ala-152 is editing domain. Positions Pro-215–Pro-514 are catalytic. Cys-307, His-359, and His-483 together coordinate Zn(2+).

This sequence belongs to the class-II aminoacyl-tRNA synthetase family. As to quaternary structure, homodimer. Zn(2+) is required as a cofactor.

The protein resides in the cytoplasm. The enzyme catalyses tRNA(Thr) + L-threonine + ATP = L-threonyl-tRNA(Thr) + AMP + diphosphate + H(+). In terms of biological role, catalyzes the attachment of threonine to tRNA(Thr) in a two-step reaction: L-threonine is first activated by ATP to form Thr-AMP and then transferred to the acceptor end of tRNA(Thr). Also edits incorrectly charged L-seryl-tRNA(Thr). This Methanosarcina acetivorans (strain ATCC 35395 / DSM 2834 / JCM 12185 / C2A) protein is Threonine--tRNA ligase.